The chain runs to 142 residues: MGSEALAYALRLLARKGYSRAALRAKLAARFGEAEAEAALGRLEAMGYLDDRAYARAFVETRARRYGPRKLRALLLARGVPEEVVEEVLPEARVEEALAVLRRYRHREDKARAVRFLEGRGFPLGVALEAWRLAQEEGEGYK.

It belongs to the RecX family.

Its subcellular location is the cytoplasm. In terms of biological role, modulates RecA activity. The chain is Regulatory protein RecX from Thermus thermophilus (strain ATCC BAA-163 / DSM 7039 / HB27).